The primary structure comprises 957 residues: MTQTLSQLENSGAFIERHIGPDAAQQQEMLNAVGAQSLNALTGQIVPKDIQLATPPQVGAPATEYAALAELKAIASRNKRFTSYIGMGYTAVQLPPVILRNMLENPGWYTAYTPYQPEVSQGRLEALLNFQQVTLDLTGLDMASASLLDEATAAAEAMAMAKRVSKLKNANRFFVASDVHPQTLDVVRTRAETFGFEVIVDDAQKVLDHQDVFGVLLQQVGTTGEIHDYTALISELKSRKIVVSVAADIMALVLLTAPGKQGADIVFGSAQRFGVPMGYGGPHAAFFAAKDEYKRSMPGRIIGVSKDAAGNTALRMAMQTREQHIRREKANSNICTSQVLLANIASLYAVYHGPVGLKRIANRIHRLTDILAAGLQQKGLKLRHAHYFDTLCVEVADKAGVLARAEAAEINLRSDILNAVGITLDETTTRENVMQLFSVLLGDNHGLDIDTLDKDVAHDSRSIQAAMLRDDEILTHPVFNRYHSETEMMRYMHSLERKDLALNQAMIPLGSCTMKLNAAAEMIPITWPEFAELHPFCPPEQAEGYQQMIAQLADWLVKLTGYDAVCMQPNSGAQGEYAGLLAIRHYHESRNEGHRDICLIPASAHGTNPASAHMAGMQVVVVACDKNGNIDLTDLRAKAEQAGDNLSCIMVTYPSTHGVYEETIREVCEVVHQFGGQVYLDGANMNAQVGITSPGFIGADVSHLNLHKTFCIPHGGGGPGMGPIGVKAHLAPFVPGHSVVQIEGMLTRQGAVSAAPFGSASILPISWMYIRMMGAEGLKKASQVAILNANYIASRLQDAFPVLYTGRDGRVAHECILDIRPLKEETGISELDIAKRLIDYGFHAPTMSFPVAGTLMVEPTESESKVELDRFIDAMLAIRAEIDQVKAGVWPLEDNPLVNAPHIQSELVAEWAHPYSREVAVFPAGVADKYWPTVKRLDDVYGDRNLFCSCVPISEYQ.

An N6-(pyridoxal phosphate)lysine modification is found at K708.

It belongs to the GcvP family. In terms of assembly, the glycine cleavage system is composed of four proteins: P, T, L and H. The cofactor is pyridoxal 5'-phosphate.

The catalysed reaction is N(6)-[(R)-lipoyl]-L-lysyl-[glycine-cleavage complex H protein] + glycine + H(+) = N(6)-[(R)-S(8)-aminomethyldihydrolipoyl]-L-lysyl-[glycine-cleavage complex H protein] + CO2. The glycine cleavage system catalyzes the degradation of glycine. The P protein binds the alpha-amino group of glycine through its pyridoxal phosphate cofactor; CO(2) is released and the remaining methylamine moiety is then transferred to the lipoamide cofactor of the H protein. The sequence is that of Glycine dehydrogenase (decarboxylating) from Escherichia coli O81 (strain ED1a).